We begin with the raw amino-acid sequence, 546 residues long: Glutathione synthetase, chloroplastic (546 aa).

Residues 1–63 (MGSGCSSPSI…SPLKCAKVPE (63 aa)) constitute a chloroplast transit peptide. R200 serves as a coordination point for substrate. Position 216 (E216) interacts with ATP. Mg(2+) is bound by residues E216 and N218. Residues 220-223 (ISSS), 288-290 (ERN), Q294, and 342-345 (RAGY) contribute to the substrate site. Residues K381, 435–444 (KPQREGGGNN), Y446, 471–474 (MQRI), and E497 each bind ATP. A Mg(2+)-binding site is contributed by E439. Position 522 (R522) interacts with substrate. 2 residues coordinate ATP: K524 and E530. 533–534 (VA) is a substrate binding site.

Belongs to the eukaryotic GSH synthase family. Homodimer. It depends on Mg(2+) as a cofactor.

It localises to the plastid. The protein localises to the chloroplast. The enzyme catalyses gamma-L-glutamyl-L-cysteine + glycine + ATP = glutathione + ADP + phosphate + H(+). The protein operates within sulfur metabolism; glutathione biosynthesis; glutathione from L-cysteine and L-glutamate: step 2/2. The sequence is that of Glutathione synthetase, chloroplastic (GSH2) from Solanum lycopersicum (Tomato).